We begin with the raw amino-acid sequence, 271 residues long: MATEHNVQLVPGSQKIPKGVVSPRSAAEGPALTRRRSKKESWHPGSQKASSGDQSSSQGSEASGSSKHPPRTKVGQEEPSSAPARPASHRHSHRHRSDPQQDAAQRTYGPLLNRMFGKDRELGPEELEELQAAFEEFDTDQDGYIGYRELGDCMRTLGYMPTEMELLEVSQHVKMRMGGFVDFEEFVELISPKLREETAHMLGVRELRIAFREFDKDRDGRITVAELRQAAPALLGEPLEGTELDEMLREMDLNGDGTIDFDEFVMMLSTG.

Positions 1-105 (MATEHNVQLV…RSDPQQDAAQ (105 aa)) are disordered. A Phosphoserine; by PKC/PRKCZ modification is found at serine 37. The span at 45–67 (GSQKASSGDQSSSQGSEASGSSK) shows a compositional bias: low complexity. Residues 87–96 (ASHRHSHRHR) show a composition bias toward basic residues. EF-hand domains follow at residues 125–160 (EELE…LGYM), 179–196 (GFVD…KLRE), 202–237 (LGVR…LLGE), and 239–271 (LEGT…LSTG). Residues aspartate 138, aspartate 140, aspartate 142, tyrosine 144, and glutamate 149 each contribute to the Ca(2+) site. Ca(2+) contacts are provided by aspartate 215, aspartate 217, aspartate 219, arginine 221, glutamate 226, aspartate 252, asparagine 254, aspartate 256, threonine 258, and glutamate 263.

In terms of assembly, interacts with CACNA1F and CACNA1D (via IQ domain) in a calcium independent manner. Interacts (via N-terminus) with UNC119. In terms of processing, phosphorylated. Phosphorylation levels change with the light conditions and regulate the activity, but has no effect on calcium binding. Expressed in retina and in the inner hair cells (IHC) of the cochlea.

The protein localises to the cytoplasm. It is found in the presynapse. Its function is as follows. Involved in normal synaptic function through regulation of Ca(2+) influx and neurotransmitter release in photoreceptor synaptic terminals and in auditory transmission. Modulator of CACNA1D and CACNA1F, suppressing the calcium-dependent inactivation and shifting the activation range to more hyperpolarized voltages. This is Calcium-binding protein 4 (Cabp4) from Mus musculus (Mouse).